A 280-amino-acid chain; its full sequence is Orotidine 5'-phosphate decarboxylase (280 aa).

Substrate contacts are provided by residues Asp40, 62-64, 93-102, Tyr228, and Arg246; these read KTH and DRKFVDIGNT. Residue Lys95 is the Proton donor of the active site.

It belongs to the OMP decarboxylase family.

The catalysed reaction is orotidine 5'-phosphate + H(+) = UMP + CO2. It functions in the pathway pyrimidine metabolism; UMP biosynthesis via de novo pathway; UMP from orotate: step 2/2. The protein is Orotidine 5'-phosphate decarboxylase (PYRG) of Solorina crocea.